The primary structure comprises 417 residues: Serine hydroxymethyltransferase 2 (417 aa).

(6S)-5,6,7,8-tetrahydrofolate is bound by residues L121 and 125–127; that span reads GHL. N6-(pyridoxal phosphate)lysine is present on K230. 355–357 provides a ligand contact to (6S)-5,6,7,8-tetrahydrofolate; that stretch reads SPF.

It belongs to the SHMT family. As to quaternary structure, homodimer. It depends on pyridoxal 5'-phosphate as a cofactor.

The protein resides in the cytoplasm. The enzyme catalyses (6R)-5,10-methylene-5,6,7,8-tetrahydrofolate + glycine + H2O = (6S)-5,6,7,8-tetrahydrofolate + L-serine. Its pathway is one-carbon metabolism; tetrahydrofolate interconversion. It participates in amino-acid biosynthesis; glycine biosynthesis; glycine from L-serine: step 1/1. Its function is as follows. Catalyzes the reversible interconversion of serine and glycine with tetrahydrofolate (THF) serving as the one-carbon carrier. This reaction serves as the major source of one-carbon groups required for the biosynthesis of purines, thymidylate, methionine, and other important biomolecules. Also exhibits THF-independent aldolase activity toward beta-hydroxyamino acids, producing glycine and aldehydes, via a retro-aldol mechanism. This Pseudomonas fluorescens (strain ATCC BAA-477 / NRRL B-23932 / Pf-5) protein is Serine hydroxymethyltransferase 2.